Consider the following 526-residue polypeptide: Cytochrome P450 monooxygenase BOT4 (526 aa).

A glycan (N-linked (GlcNAc...) asparagine) is linked at asparagine 5. Residues 41 to 61 traverse the membrane as a helical segment; sequence CLVAIILCRFIAVWSYNLWFH. Residues asparagine 205 and asparagine 281 are each glycosylated (N-linked (GlcNAc...) asparagine). Cysteine 464 is a binding site for heme.

This sequence belongs to the cytochrome P450 family. Requires heme as cofactor.

Its subcellular location is the membrane. It functions in the pathway secondary metabolite biosynthesis. In terms of biological role, cytochrome P450 monooxygenase; part of the gene cluster that mediates the biosynthesis of botrydial. Botrydial is necessary for colonization of plant tissue by the T4 strain. It is a strain-dependent virulence factor since highly aggressive strains like SAS56 or B05 still retain substantial virulence when botrydial synthesis is impaired, since they produce also botcinic acid. The first step of botrydial biosynthesis is performed by the sesquiterpene synthase BOT2 which catalyzes the cyclization of farnesyl diphosphate (FPP) to presilphiperfolan-8-beta-ol (PSP). The cytochrome P450 monooxygenase BOT4 then catalyzes the hydroxylation at C-4 to give a probotryane intermediate. Acetylation of the hydroxyl at C-4 is carried out by the acetyltransferase BOT5, followed by the combined action of the P450 monooxygenases BOT3 and BOT1, to yield finally the glycol, via the regio- and stereospecific hydroxylations at C-10 and C-15 of the probotryane intermediates, respectively. The cleavage of the C10-C15 bond of probotryane skeleton is an intriguing and chemically important reaction, which could be mediated by some of the monooxygenases or by a combination of them. It is possible that either BOT3 or BOT1 would oxidize either the 10- or the 15-hydroxy group to the hydroperoxide derivative, which would then undergo heterolytic fragmentation to give the dialdehyde botrydial. Finally, the dehydrogenase BOT7 might be involved in the conversion of botrydial to dihydrobotrydial. The sequence is that of Cytochrome P450 monooxygenase BOT4 from Botryotinia fuckeliana (Noble rot fungus).